The primary structure comprises 800 residues: Fibroblast growth factor receptor 3 (800 aa).

Positions 1 to 20 are cleaved as a signal peptide; sequence MVPLCLLLYLATLVFPPVYS. Residues 21 to 122 form the Ig-like C2-type 1 domain; it reads AHLLSPEPTD…YTVKVIDSLS (102 aa). Residues 21–363 lie on the Extracellular side of the membrane; that stretch reads AHLLSPEPTD…EMEREDDYAD (343 aa). The cysteines at positions 55 and 101 are disulfide-linked. N-linked (GlcNAc...) asparagine glycosylation is found at asparagine 77, asparagine 90, and asparagine 112. The span at 124-136 shows a compositional bias: acidic residues; the sequence is GDDEDYDEDEDEA. The tract at residues 124–143 is disordered; the sequence is GDDEDYDEDEDEAGNGNAEA. Ig-like C2-type domains are found at residues 144–237 and 246–348; these read PYWT…YQLD and PILQ…AWLT. A disulfide bridge connects residues cysteine 169 and cysteine 221. 5 N-linked (GlcNAc...) asparagine glycosylation sites follow: asparagine 218, asparagine 255, asparagine 287, asparagine 308, and asparagine 321. A disulfide bridge connects residues cysteine 268 and cysteine 332. The chain crosses the membrane as a helical span at residues 364–384; that stretch reads ILIYVTSCVLFILTMVIIILC. The Cytoplasmic segment spans residues 385 to 800; it reads RMWINTQKTL…HHHSNGVIRT (416 aa). The Protein kinase domain occupies 460 to 739; the sequence is LTLGKPLGEG…RQLVEDHDRV (280 aa). ATP-binding positions include 466–474 and lysine 496; that span reads LGEGCFGQV. The active-site Proton acceptor is the aspartate 605. Phosphotyrosine; by autocatalysis is present on residues tyrosine 635, tyrosine 636, tyrosine 712, and tyrosine 748. The span at 764 to 773 shows a compositional bias: polar residues; the sequence is DSNSTCSSGD. Residues 764 to 800 form a disordered region; it reads DSNSTCSSGDDSVFAHDPLPEEPCLPKHHHSNGVIRT.

This sequence belongs to the protein kinase superfamily. Tyr protein kinase family. Fibroblast growth factor receptor subfamily. Monomer. Homodimer after ligand binding. Autophosphorylated. Binding of FGF family members together with heparan sulfate proteoglycan or heparin promotes receptor dimerization and autophosphorylation on tyrosine residues. Autophosphorylation occurs in trans between the two FGFR molecules present in the dimer.

The protein resides in the cell membrane. The enzyme catalyses L-tyrosyl-[protein] + ATP = O-phospho-L-tyrosyl-[protein] + ADP + H(+). With respect to regulation, present in an inactive conformation in the absence of bound ligand. Ligand binding leads to dimerization and activation by autophosphorylation on tyrosine residues. Its function is as follows. Tyrosine-protein kinase that acts as a cell-surface receptor for fibroblast growth factors and plays an essential role in the regulation of cell proliferation, differentiation and apoptosis. Plays an essential role in the regulation of chondrocyte differentiation, proliferation and apoptosis, and is required for normal skeleton development. Regulates both osteogenesis and postnatal bone mineralization by osteoblasts. Promotes apoptosis in chondrocytes, but can also promote cancer cell proliferation. Phosphorylates PLCG1, CBL and FRS2. Ligand binding leads to the activation of several signaling cascades. Activation of PLCG1 leads to the production of the cellular signaling molecules diacylglycerol and inositol 1,4,5-trisphosphate. Phosphorylation of FRS2 triggers recruitment of GRB2, GAB1, PIK3R1 and SOS1, and mediates activation of RAS, MAPK1/ERK2, MAPK3/ERK1 and the MAP kinase signaling pathway, as well as of the AKT1 signaling pathway. In Danio rerio (Zebrafish), this protein is Fibroblast growth factor receptor 3 (fgfr3).